Here is a 299-residue protein sequence, read N- to C-terminus: 4-hydroxy-tetrahydrodipicolinate synthase (299 aa).

Threonine 44 is a pyruvate binding site. Tyrosine 133 serves as the catalytic Proton donor/acceptor. Lysine 162 (schiff-base intermediate with substrate) is an active-site residue. Pyruvate is bound at residue isoleucine 204.

This sequence belongs to the DapA family. As to quaternary structure, homotetramer; dimer of dimers.

It is found in the cytoplasm. The enzyme catalyses L-aspartate 4-semialdehyde + pyruvate = (2S,4S)-4-hydroxy-2,3,4,5-tetrahydrodipicolinate + H2O + H(+). The protein operates within amino-acid biosynthesis; L-lysine biosynthesis via DAP pathway; (S)-tetrahydrodipicolinate from L-aspartate: step 3/4. Catalyzes the condensation of (S)-aspartate-beta-semialdehyde [(S)-ASA] and pyruvate to 4-hydroxy-tetrahydrodipicolinate (HTPA). The protein is 4-hydroxy-tetrahydrodipicolinate synthase of Thermus thermophilus (strain ATCC BAA-163 / DSM 7039 / HB27).